Reading from the N-terminus, the 210-residue chain is MSKQNRGRLIVIEGLDRSGKSTQCQLLVDKLISQHEKAELFKFPDRTTAIGKKIDDYLKESVQLNDQVIHLLFSANRWETIQYIYEQINKGVTCILDRYAFSGIAFSAAKGLDWEWCKSPDRGLPRPDLVIFLNVDPRIAATRGQYGEERYEKIEMQEKVLKNFQRLQKEFREEGLEFITLDASSSLEDVHSQIVDLVSNVNIHETLDVL.

Residue G14–S21 coordinates ATP.

The protein belongs to the thymidylate kinase family.

The enzyme catalyses dTMP + ATP = dTDP + ADP. Its pathway is pyrimidine metabolism; dTTP biosynthesis. Catalyzes the conversion of dTMP to dTDP. This is Thymidylate kinase (tmp1) from Schizosaccharomyces pombe (strain 972 / ATCC 24843) (Fission yeast).